Reading from the N-terminus, the 442-residue chain is Exodeoxyribonuclease 7 large subunit (442 aa).

This sequence belongs to the XseA family. Heterooligomer composed of large and small subunits.

It is found in the cytoplasm. It carries out the reaction Exonucleolytic cleavage in either 5'- to 3'- or 3'- to 5'-direction to yield nucleoside 5'-phosphates.. In terms of biological role, bidirectionally degrades single-stranded DNA into large acid-insoluble oligonucleotides, which are then degraded further into small acid-soluble oligonucleotides. This is Exodeoxyribonuclease 7 large subunit from Shewanella woodyi (strain ATCC 51908 / MS32).